Reading from the N-terminus, the 339-residue chain is MVREEVAGSTQTLQWKCVESRVDSKRLYYGRFILSPLRKGQADTVGIALRRALLGEIEGTCITRAKFGXVPHEYSTIAGIEESVQEILLNLKEIVLRSNLYGVRDASICVKGPRYITAQDIILPPSVEIVDTAQPIANLTEPIDFCIDLQIKRDRGYQTELRKNYQDGSYPIDAVSMPVRNVNYSIFSCGNGNEKHEILFLEIWTNGSLTPKEALYEASRNLIDLFLPFLHAEEEGTSFEENKNRFTPPLFTFQKRLTNLKKNKKGIPLNCIFIDQLELTSRTYNCLKRANIHTLLDLLSKTEEDLMRIDSFRMEDRKHIWDTLEKHLPIDLLKNKLSF.

The alpha N-terminal domain (alpha-NTD) stretch occupies residues 1 to 233 (MVREEVAGST…DLFLPFLHAE (233 aa)). The interval 264–339 (KKGIPLNCIF…IDLLKNKLSF (76 aa)) is alpha C-terminal domain (alpha-CTD).

This sequence belongs to the RNA polymerase alpha chain family. In terms of assembly, in plastids the minimal PEP RNA polymerase catalytic core is composed of four subunits: alpha, beta, beta', and beta''. When a (nuclear-encoded) sigma factor is associated with the core the holoenzyme is formed, which can initiate transcription.

The protein resides in the plastid. It localises to the chloroplast. It carries out the reaction RNA(n) + a ribonucleoside 5'-triphosphate = RNA(n+1) + diphosphate. Functionally, DNA-dependent RNA polymerase catalyzes the transcription of DNA into RNA using the four ribonucleoside triphosphates as substrates. This is DNA-directed RNA polymerase subunit alpha from Psathyrostachys fragilis (Russian wild rye).